Reading from the N-terminus, the 279-residue chain is Dehydrogenase/reductase SDR family member 4 (279 aa).

An NADP(+)-binding site is contributed by 37–61 (LVTASTDGIGFAIARRLAQDGAHVV). Lys-93 bears the N6-acetyllysine; alternate mark. Position 93 is an N6-succinyllysine; alternate (Lys-93). The residue at position 106 (Lys-106) is an N6-acetyllysine. Position 170 (Ser-170) interacts with substrate. Tyr-183 acts as the Proton acceptor in catalysis. Lys-187 provides a ligand contact to NADP(+). Ser-221 bears the Phosphoserine mark. N6-succinyllysine is present on Lys-235. Residues 277–279 (SHL) carry the Peroxisomal targeting signal motif.

This sequence belongs to the short-chain dehydrogenases/reductases (SDR) family. As to quaternary structure, homotetramer.

It localises to the peroxisome. The catalysed reaction is a secondary alcohol + NADP(+) = a ketone + NADPH + H(+). The enzyme catalyses 3alpha-hydroxy-5beta-pregnan-20-one + NADP(+) = 5beta-pregnan-3,20-dione + NADPH + H(+). It carries out the reaction 5beta-dihydrotestosterone + NADPH + H(+) = 5beta-androstane-3alpha,17beta-diol + NADP(+). It catalyses the reaction all-trans-retinol + NADP(+) = all-trans-retinal + NADPH + H(+). The catalysed reaction is isatin + NADPH + H(+) = 3-hydroxyindolin-2-one + NADP(+). In terms of biological role, NADPH-dependent oxidoreductase which catalyzes the reduction of a variety of compounds bearing carbonyl groups including ketosteroids, alpha-dicarbonyl compounds, aldehydes, aromatic ketones and quinones. Reduces all-trans-retinal and 9-cis retinal. Reduces 3-ketosteroids and benzil into 3alpha-hydroxysteroids and S-benzoin, respectively, in contrast to the stereoselectivity of primates DHRS4s which produce 3beta-hydroxysteroids and R-benzoin. In the reverse reaction, catalyzes the NADP-dependent oxidation of 3alpha-hydroxysteroids and alcohol, but with much lower efficiency. Involved in the metabolism of 3alpha-hydroxysteroids, retinoid, isatin and xenobiotic carbonyl compounds. This is Dehydrogenase/reductase SDR family member 4 (DHRS4) from Bos taurus (Bovine).